The sequence spans 383 residues: Probable assembly chaperone of rpl4 (383 aa).

Residues 1 to 12 (MGKPRPHKKKAS) are compositionally biased toward basic residues. The segment at 1 to 33 (MGKPRPHKKKASKTREKSVLSAGGSISKRKMNE) is disordered. 4 TPR repeats span residues 35–68 (PRKL…ATSN), 73–106 (LSSL…DPTG), 116–147 (AEKF…LRGI), and 193–226 (PEVL…WKDL). The tract at residues 345–383 (NKELGEEMEDDSNVEDGEGEGEEEWEGIESDSDHEMADS) is disordered. Over residues 350 to 374 (EEMEDDSNVEDGEGEGEEEWEGIES) the composition is skewed to acidic residues.

The protein belongs to the ACL4 family.

It localises to the cytoplasm. The protein localises to the nucleus. Functionally, acts as a chaperone for the L4 ribosomal subunit, required for hierarchical ribosome assembly. Shields ribosomal protein L4 until timely release and insertion into the pre-ribosome is possible, once ribosomal protein L18 is present. This chain is Probable assembly chaperone of rpl4, found in Emericella nidulans (strain FGSC A4 / ATCC 38163 / CBS 112.46 / NRRL 194 / M139) (Aspergillus nidulans).